We begin with the raw amino-acid sequence, 1067 residues long: Myocardin-related transcription factor B (1067 aa).

RPEL repeat units lie at residues 46 to 71, 90 to 115, and 134 to 159; these read EVLQ…PPLK, NFLK…EETL, and DDLN…PVDL. Disordered stretches follow at residues 175 to 223 and 249 to 286; these read NLDT…NTTI and PLSC…PRVK. Composition is skewed to polar residues over residues 193 to 203 and 212 to 223; these read QPASQESQGSA and SDSSSPVSNTTI. The segment covering 268–283 has biased composition (basic and acidic residues); the sequence is KHTEKPRSKKSKDPKP. Residues 390-424 enclose the SAP domain; the sequence is LDDMKVAELKMELKLRGLPVSGTKMDLIERLKPFQ. The stretch at 540 to 594 forms a coiled coil; it reads GNTPNVELDAVEKDRKLQEKEKQIEELKRKLEQEQKLVEVLKKQLELEKRGQQQQ. The span at 799 to 819 shows a compositional bias: polar residues; sequence ISTSAQPQRSTQLTAVQNGPT. The tract at residues 799–829 is disordered; that stretch reads ISTSAQPQRSTQLTAVQNGPTSLHEKSSTPP.

Interacts with SRF.

The protein localises to the nucleus. In terms of biological role, poor transcriptional factor which uses the canonical single or multiple CArG boxes DNA sequence. Acts as a cofactor of serum response factor (SRF) with the potential to modulate SRF target genes. This is Myocardin-related transcription factor B (mrtfb) from Xenopus laevis (African clawed frog).